We begin with the raw amino-acid sequence, 450 residues long: Keratin, type I cytoskeletal 25 (450 aa).

Residues 1–11 (MSLRLSSASRR) are compositionally biased toward low complexity. The tract at residues 1–20 (MSLRLSSASRRSCPRPTTGS) is disordered. Positions 1–78 (MSLRLSSASR…VNERGLLSGN (78 aa)) are head. The interval 79 to 114 (EKVTMQNLNDRLASYLDSVHALEEANADLEQKIKGW) is coil 1A. The IF rod domain occupies 79-394 (EKVTMQNLND…LLIGGDDGAC (316 aa)). The tract at residues 115–136 (YEKFGPGSCRGLDHDYSRYFPI) is linker 1. The tract at residues 137-228 (IDDLKNQIIA…KNHKEEMQVL (92 aa)) is coil 1B. The linker 12 stretch occupies residues 229 to 251 (QCAAGGNVNVEMNAAPGVDLTVL). The interval 252-390 (LNNMRAEYEA…ETYCLLIGGD (139 aa)) is coil 2. Positions 391–450 (DGACKSGGYKSKDYGSGNVGSQVKDPAKAIVVKKVLEEVDQRSKILTTRLHSLEEKSQSN) are tail. At Ser-442 the chain carries Phosphoserine.

Belongs to the intermediate filament family. Heterodimer of a type I and a type II keratin. Heterodimer with type II keratin KRT5 leading to the formation of keratin intermediate filament (KIF) network. Interacts with KRT6A to form filaments. As to expression, strongly expressed in skin and scalp, and weak expression observed in thymus and tongue. In the hair follicle, expressed in Henle layer, Huxley layer and in the inner root sheath cuticle of the hair follicle. Expression extends from the bulb region up to the point of differentiation into the three layers. Also present in the medulla of beard hair (at protein level).

It is found in the cytoplasm. Functionally, essential for the proper assembly of type I and type II keratin protein complexes and formation of keratin intermediate filaments in the inner root sheath (irs). Plays a role in the cytoskeleton organization. The sequence is that of Keratin, type I cytoskeletal 25 from Homo sapiens (Human).